We begin with the raw amino-acid sequence, 345 residues long: MPSPFFAEEKDIPENQNVGNKRWKKLIKGEGSDDGKEKSSDDDDSSSSTKGLFGWRGDTSSGNLFDFPNTLTDVGETKQIVDATTIVDQLEAADLGAALNLKLSFLKQDFDELPVIKKLPDNLNDTIVAKSDNLEKTSKTNSTFYKDNGDSSEKQGSAESKNSPKTQLKEIFNGQNGDSGNLGKLAEQLQKTDSTKMEARSQTWQLRNAVSLKTTNMAQSDENYLLLDAAIPAFETSSQSPQSSGTISGSGALVNLTSTSVNLTQQKSSTTPLNQRIVRNSTGVKLLALEGLLYYVVGSSNKQQSSSSTIATSLAQNQSNNNQEQEINSSLQKNLLKFRAFQAKN.

Disordered stretches follow at residues 1–58 (MPSP…WRGD) and 139–165 (KTNSTFYKDNGDSSEKQGSAESKNSPK). A compositionally biased stretch (basic and acidic residues) spans 27–39 (IKGEGSDDGKEKS). Residues 154–165 (KQGSAESKNSPK) are compositionally biased toward polar residues.

The protein belongs to the MG307/MG309/MG338 family.

This is an uncharacterized protein from Mycoplasma pneumoniae (strain ATCC 29342 / M129 / Subtype 1) (Mycoplasmoides pneumoniae).